We begin with the raw amino-acid sequence, 960 residues long: Dynamin-like GTPase OPA1, mitochondrial (960 aa).

A mitochondrion-targeting transit peptide spans 1–87 (MWRAGRAAVA…IKYGYQPRRN (87 aa)). The Mitochondrial matrix portion of the chain corresponds to 88-96 (FWPARLAAR). A helical membrane pass occupies residues 97–113 (LLKLRYIILGSAVGGGY). Topologically, residues 114–770 (TAKKTFDEWK…NAIENMIGPD (657 aa)) are mitochondrial intermembrane. The stretch at 210–254 (SDKEKIDQLQEELLHTQLKYQRILERLEKENKELRKLVLQKDDKG) forms a coiled coil. The LQQQIQ motif signature appears at 217–222 (QLQEEL). N6-acetyllysine is present on Lys228. The region spanning 285-561 (QDHLPRVVVV…FWKMVRESVE (277 aa)) is the Dynamin-type G domain. Residues 295–302 (GDQSAGKT) form a G1 motif region. Ser298, Gly300, Lys301, Thr302, Ser303, and Gly317 together coordinate GTP. Position 302 (Thr302) interacts with Mg(2+). The interval 321–324 (MMTR) is G2 motif. Thr323 and Asp398 together coordinate Mg(2+). The tract at residues 398 to 401 (DLPG) is G3 motif. Residues 467-470 (TKVD) are G4 motif. The GTP site is built by Lys468, Asp470, and Thr503. A G5 motif region spans residues 501–504 (VVTG). Stalk region stretches follow at residues 589-836 (DRNE…IKDT) and 874-928 (CNDV…VKLL). The paddle region stretch occupies residues 736-856 (SDKQQWDAAI…KTALNHCNLC (121 aa)). An intramembrane segment occupies 771 to 781 (WKKRWMYWKNR). Residues 782–960 (TQEQCVHNET…AFIEALHQEK (179 aa)) lie on the Mitochondrial intermembrane side of the membrane. A disulfide bridge links Cys856 with Cys874. Residues 895–960 (RQQLTNTEVR…AFIEALHQEK (66 aa)) adopt a coiled-coil conformation.

Belongs to the TRAFAC class dynamin-like GTPase superfamily. Dynamin/Fzo/YdjA family. Oligomeric complex consisting of membrane-bound and soluble forms of OPA1. Interacts with RCC1L; RCC1L acts as a guanine nucleotide exchange factor (GEF) for OPA1 by exchanging bound GDP for free GTP. Interacts with CHCHD3 and IMMT; these interactions occur preferentially with soluble OPA1 forms. Interacts with PRELID1. In terms of processing, cleaved by OMA1 or YME1L downstream of the transmembrane region in response to different signals to generate soluble forms. Cleaved by OMA1 at position S1 following stress conditions, generating the short soluble form (Dynamin-like GTPase OPA1, short form; S-OPA1). AFG3L2 is involved in the regulation of OMA1-dependent processing of OPA1. PARL-dependent proteolytic processing releases an antiapoptotic soluble form not required for mitochondrial fusion. Cleavage at position S2 by YME1L is required to mediate oxidative phosphorylation (OXPHOS)-induced mitochondrial fusion. Cleavage occurs in the sequence motif Leu-Gln-Gln-Gln-Ile-Gln (LQQQIQ). Post-translationally, cleavage at position S3 by YME1L is required for membrane tubulation. Detected in brain (at protein level). Detected in brain, brain stem, heart, kidney, liver and skeletal muscle.

It localises to the mitochondrion inner membrane. The protein localises to the mitochondrion intermembrane space. It catalyses the reaction GTP + H2O = GDP + phosphate + H(+). Its activity is regulated as follows. Activated by guanine nucleotide exchange factor RCC1L. Functionally, dynamin-related GTPase that is essential for normal mitochondrial morphology by mediating fusion of the mitochondrial inner membranes, regulating cristae morphology and maintaining respiratory chain function. Exists in two forms: the transmembrane, long form (Dynamin-like GTPase OPA1, long form; L-OPA1), which is tethered to the inner mitochondrial membrane, and the short soluble form (Dynamin-like GTPase OPA1, short form; S-OPA1), which results from proteolytic cleavage and localizes in the intermembrane space. Both forms (L-OPA1 and S-OPA1) cooperate to catalyze the fusion of the mitochondrial inner membrane. The equilibrium between L-OPA1 and S-OPA1 is essential: excess levels of S-OPA1, produced by cleavage by OMA1 following loss of mitochondrial membrane potential, lead to an impaired equilibrium between L-OPA1 and S-OPA1, inhibiting mitochondrial fusion. The balance between L-OPA1 and S-OPA1 also influences cristae shape and morphology. Involved in remodeling cristae and the release of cytochrome c during apoptosis. Proteolytic processing by PARL in response to intrinsic apoptotic signals may lead to disassembly of OPA1 oligomers and release of the caspase activator cytochrome C (CYCS) into the mitochondrial intermembrane space. Acts as a regulator of T-helper Th17 cells, which are characterized by cells with fused mitochondria with tight cristae, by mediating mitochondrial membrane remodeling: OPA1 is required for interleukin-17 (IL-17) production. Its role in mitochondrial morphology is required for mitochondrial genome maintenance. In terms of biological role, constitutes the transmembrane long form (L-OPA1) that plays a central role in mitochondrial inner membrane fusion and cristae morphology. L-OPA1 and the soluble short form (S-OPA1) form higher-order helical assemblies that coordinate the fusion of mitochondrial inner membranes. Inner membrane-anchored L-OPA1 molecules initiate membrane remodeling by recruiting soluble S-OPA1 to rapidly polymerize into a flexible cylindrical scaffold encaging the mitochondrial inner membrane. Once at the membrane surface, the formation of S-OPA1 helices induce bilayer curvature. OPA1 dimerization through the paddle region, which inserts into cardiolipin-containing membrane, promotes GTP hydrolysis and the helical assembly of a flexible OPA1 lattice on the membrane, which drives membrane curvature and mitochondrial fusion. Plays a role in the maintenance and remodeling of mitochondrial cristae, some invaginations of the mitochondrial inner membrane that provide an increase in the surface area. Probably acts by forming helical filaments at the inside of inner membrane tubes with the shape and dimensions of crista junctions. The equilibrium between L-OPA1 and S-OPA1 influences cristae shape and morphology: increased L-OPA1 levels promote cristae stacking and elongated mitochondria, while increased S-OPA1 levels correlated with irregular cristae packing and round mitochondria shape. Its function is as follows. Constitutes the soluble short form (S-OPA1) generated by cleavage by OMA1, which plays a central role in mitochondrial inner membrane fusion and cristae morphology. The transmembrane long form (L-OPA1) and the S-OPA1 form higher-order helical assemblies that coordinate the fusion of mitochondrial inner membranes. Inner membrane-anchored L-OPA1 molecules initiate membrane remodeling by recruiting soluble S-OPA1 to rapidly polymerize into a flexible cylindrical scaffold encaging the mitochondrial inner membrane. Once at the membrane surface, the formation of S-OPA1 helices induce bilayer curvature. OPA1 dimerization through the paddle region, which inserts into cardiolipin-containing membrane, promotes GTP hydrolysis and the helical assembly of a flexible OPA1 lattice on the membrane, which drives membrane curvature and mitochondrial fusion. Excess levels of S-OPA1 produced by cleavage by OMA1 following stress conditions that induce loss of mitochondrial membrane potential, lead to an impaired equilibrium between L-OPA1 and S-OPA1, thereby inhibiting mitochondrial fusion. Involved in mitochondrial safeguard in response to transient mitochondrial membrane depolarization by mediating flickering: cleavage by OMA1 leads to excess production of S-OPA1, preventing mitochondrial hyperfusion. Plays a role in the maintenance and remodeling of mitochondrial cristae, some invaginations of the mitochondrial inner membrane that provide an increase in the surface area. Probably acts by forming helical filaments at the inside of inner membrane tubes with the shape and dimensions of crista junctions. The equilibrium between L-OPA1 and S-OPA1 influences cristae shape and morphology: increased L-OPA1 levels promote cristae stacking and elongated mitochondria, while increased S-OPA1 levels correlated with irregular cristae packing and round mitochondria shape. Isoforms that contain the alternative exon 4b are required for mitochondrial genome maintenance, possibly by anchoring the mitochondrial nucleoids to the inner mitochondrial membrane. The protein is Dynamin-like GTPase OPA1, mitochondrial of Mus musculus (Mouse).